We begin with the raw amino-acid sequence, 311 residues long: Cell division protein FtsQ (311 aa).

Residues 1 to 28 (MTTRSPARPLIARRSTPAPTPAPHDPAP) are disordered. Over 1 to 46 (MTTRSPARPLIARRSTPAPTPAPHDPAPSRLSYRVTRLWLTPIFRK) the chain is Cytoplasmic. The helical transmembrane segment at 47–67 (ALHLGIPVFALFAAVTWYLGD) threads the bilayer. Residues 68–311 (ETRVAELFEA…AERPDGDTRG (244 aa)) are Periplasmic-facing. One can recognise a POTRA domain in the interval 91–159 (FRVNVLGIDG…GYLAVRIDER (69 aa)).

This sequence belongs to the FtsQ/DivIB family. FtsQ subfamily.

Its subcellular location is the cell inner membrane. Functionally, essential cell division protein. The sequence is that of Cell division protein FtsQ from Jannaschia sp. (strain CCS1).